Reading from the N-terminus, the 247-residue chain is Cell division protein ZapD (247 aa).

The protein belongs to the ZapD family. Interacts with FtsZ.

The protein resides in the cytoplasm. Its function is as follows. Cell division factor that enhances FtsZ-ring assembly. Directly interacts with FtsZ and promotes bundling of FtsZ protofilaments, with a reduction in FtsZ GTPase activity. The protein is Cell division protein ZapD of Salmonella choleraesuis (strain SC-B67).